Consider the following 221-residue polypeptide: Ribosomal RNA small subunit methyltransferase G 3 (221 aa).

S-adenosyl-L-methionine is bound by residues G85, F90, 136–137 (IE), and R150.

Belongs to the methyltransferase superfamily. RNA methyltransferase RsmG family.

The protein resides in the cytoplasm. The enzyme catalyses guanosine(527) in 16S rRNA + S-adenosyl-L-methionine = N(7)-methylguanosine(527) in 16S rRNA + S-adenosyl-L-homocysteine. Functionally, specifically methylates the N7 position of guanine in position 527 of 16S rRNA. This chain is Ribosomal RNA small subunit methyltransferase G 3, found in Bdellovibrio bacteriovorus (strain ATCC 15356 / DSM 50701 / NCIMB 9529 / HD100).